Here is a 583-residue protein sequence, read N- to C-terminus: 2-succinyl-5-enolpyruvyl-6-hydroxy-3-cyclohexene-1-carboxylate synthase (583 aa).

Belongs to the TPP enzyme family. MenD subfamily. Homodimer. Mg(2+) serves as cofactor. Mn(2+) is required as a cofactor. Requires thiamine diphosphate as cofactor.

It catalyses the reaction isochorismate + 2-oxoglutarate + H(+) = 5-enolpyruvoyl-6-hydroxy-2-succinyl-cyclohex-3-ene-1-carboxylate + CO2. It participates in quinol/quinone metabolism; 1,4-dihydroxy-2-naphthoate biosynthesis; 1,4-dihydroxy-2-naphthoate from chorismate: step 2/7. The protein operates within quinol/quinone metabolism; menaquinone biosynthesis. Functionally, catalyzes the thiamine diphosphate-dependent decarboxylation of 2-oxoglutarate and the subsequent addition of the resulting succinic semialdehyde-thiamine pyrophosphate anion to isochorismate to yield 2-succinyl-5-enolpyruvyl-6-hydroxy-3-cyclohexene-1-carboxylate (SEPHCHC). The polypeptide is 2-succinyl-5-enolpyruvyl-6-hydroxy-3-cyclohexene-1-carboxylate synthase (Chlorobium phaeovibrioides (strain DSM 265 / 1930) (Prosthecochloris vibrioformis (strain DSM 265))).